Consider the following 502-residue polypeptide: ATP synthase subunit alpha (502 aa).

An ATP-binding site is contributed by 169-176 (GDRQTGKT).

This sequence belongs to the ATPase alpha/beta chains family. In terms of assembly, F-type ATPases have 2 components, CF(1) - the catalytic core - and CF(0) - the membrane proton channel. CF(1) has five subunits: alpha(3), beta(3), gamma(1), delta(1), epsilon(1). CF(0) has three main subunits: a(1), b(2) and c(9-12). The alpha and beta chains form an alternating ring which encloses part of the gamma chain. CF(1) is attached to CF(0) by a central stalk formed by the gamma and epsilon chains, while a peripheral stalk is formed by the delta and b chains.

Its subcellular location is the cell membrane. It carries out the reaction ATP + H2O + 4 H(+)(in) = ADP + phosphate + 5 H(+)(out). Produces ATP from ADP in the presence of a proton gradient across the membrane. The alpha chain is a regulatory subunit. This is ATP synthase subunit alpha from Clostridium perfringens (strain ATCC 13124 / DSM 756 / JCM 1290 / NCIMB 6125 / NCTC 8237 / Type A).